We begin with the raw amino-acid sequence, 364 residues long: UDP-N-acetylglucosamine--N-acetylmuramyl-(pentapeptide) pyrophosphoryl-undecaprenol N-acetylglucosamine transferase (364 aa).

Residues 10–12 (TGG), Asn-126, Arg-167, Ser-199, Ile-253, and Gln-298 contribute to the UDP-N-acetyl-alpha-D-glucosamine site.

Belongs to the glycosyltransferase 28 family. MurG subfamily.

The protein resides in the cell inner membrane. The catalysed reaction is di-trans,octa-cis-undecaprenyl diphospho-N-acetyl-alpha-D-muramoyl-L-alanyl-D-glutamyl-meso-2,6-diaminopimeloyl-D-alanyl-D-alanine + UDP-N-acetyl-alpha-D-glucosamine = di-trans,octa-cis-undecaprenyl diphospho-[N-acetyl-alpha-D-glucosaminyl-(1-&gt;4)]-N-acetyl-alpha-D-muramoyl-L-alanyl-D-glutamyl-meso-2,6-diaminopimeloyl-D-alanyl-D-alanine + UDP + H(+). The protein operates within cell wall biogenesis; peptidoglycan biosynthesis. In terms of biological role, cell wall formation. Catalyzes the transfer of a GlcNAc subunit on undecaprenyl-pyrophosphoryl-MurNAc-pentapeptide (lipid intermediate I) to form undecaprenyl-pyrophosphoryl-MurNAc-(pentapeptide)GlcNAc (lipid intermediate II). This is UDP-N-acetylglucosamine--N-acetylmuramyl-(pentapeptide) pyrophosphoryl-undecaprenol N-acetylglucosamine transferase from Amoebophilus asiaticus (strain 5a2).